The sequence spans 142 residues: UPF0336 protein PPA1896 (142 aa).

Belongs to the UPF0336 family.

The polypeptide is UPF0336 protein PPA1896 (Cutibacterium acnes (strain DSM 16379 / KPA171202) (Propionibacterium acnes)).